A 164-amino-acid chain; its full sequence is 17.8 kDa heat shock protein (164 aa).

The region spanning 20-154 (VVAGEARPPM…HAGNGKAAGD (135 aa)) is the sHSP domain. Residues 68–93 (GEHEDANNAAKAGKASGEEEEENDGV) are disordered.

The protein belongs to the small heat shock protein (HSP20) family. As to quaternary structure, may form oligomeric structures.

Its subcellular location is the cytoplasm. This chain is 17.8 kDa heat shock protein (HSP17.8), found in Oryza sativa subsp. japonica (Rice).